The sequence spans 418 residues: Tyrosine--tRNA ligase (418 aa).

Tyr34 provides a ligand contact to L-tyrosine. Residues 39 to 48 carry the 'HIGH' region motif; it reads PTADSLHLGH. Residues Tyr169 and Gln173 each contribute to the L-tyrosine site. A 'KMSKS' region motif is present at residues 229 to 233; sequence KFGKS. An ATP-binding site is contributed by Lys232. The S4 RNA-binding domain maps to 352–418; that stretch reads LNLVDMLVTA…GKKKYAVLTY (67 aa).

The protein belongs to the class-I aminoacyl-tRNA synthetase family. TyrS type 1 subfamily. Homodimer.

It is found in the cytoplasm. The enzyme catalyses tRNA(Tyr) + L-tyrosine + ATP = L-tyrosyl-tRNA(Tyr) + AMP + diphosphate + H(+). Catalyzes the attachment of tyrosine to tRNA(Tyr) in a two-step reaction: tyrosine is first activated by ATP to form Tyr-AMP and then transferred to the acceptor end of tRNA(Tyr). This is Tyrosine--tRNA ligase from Streptococcus pyogenes serotype M12 (strain MGAS2096).